The following is a 529-amino-acid chain: Ribonuclease Y (529 aa).

The helical transmembrane segment at 4–24 (GLIYISLEVLVACLITALVMY) threads the bilayer. A KH domain is found at 216–297 (LTTRIALPCS…NRIEEVYHRV (82 aa)). An HD domain is found at 342–435 (ALQHSKEVAL…VCAADALSAG (94 aa)).

This sequence belongs to the RNase Y family.

It localises to the cell membrane. Endoribonuclease that initiates mRNA decay. The sequence is that of Ribonuclease Y from Helicobacter pylori (strain ATCC 700392 / 26695) (Campylobacter pylori).